We begin with the raw amino-acid sequence, 210 residues long: Imidazole glycerol phosphate synthase subunit HisH (210 aa).

The Glutamine amidotransferase type-1 domain occupies 3 to 210; that stretch reads KVALLDYGSG…QLLRNWIDLL (208 aa). Catalysis depends on C81, which acts as the Nucleophile. Catalysis depends on residues H191 and E193.

Heterodimer of HisH and HisF.

The protein localises to the cytoplasm. The catalysed reaction is 5-[(5-phospho-1-deoxy-D-ribulos-1-ylimino)methylamino]-1-(5-phospho-beta-D-ribosyl)imidazole-4-carboxamide + L-glutamine = D-erythro-1-(imidazol-4-yl)glycerol 3-phosphate + 5-amino-1-(5-phospho-beta-D-ribosyl)imidazole-4-carboxamide + L-glutamate + H(+). It catalyses the reaction L-glutamine + H2O = L-glutamate + NH4(+). Its pathway is amino-acid biosynthesis; L-histidine biosynthesis; L-histidine from 5-phospho-alpha-D-ribose 1-diphosphate: step 5/9. In terms of biological role, IGPS catalyzes the conversion of PRFAR and glutamine to IGP, AICAR and glutamate. The HisH subunit catalyzes the hydrolysis of glutamine to glutamate and ammonia as part of the synthesis of IGP and AICAR. The resulting ammonia molecule is channeled to the active site of HisF. The polypeptide is Imidazole glycerol phosphate synthase subunit HisH (Corynebacterium diphtheriae (strain ATCC 700971 / NCTC 13129 / Biotype gravis)).